We begin with the raw amino-acid sequence, 600 residues long: UvrABC system protein C (600 aa).

Residues 15-92 form the GIY-YIG domain; sequence EKPGCYLMKD…IKKYQPYYNV (78 aa). A UVR domain is found at 197–232; that stretch reads TSVKQDLTTKMEKASENLEFERAAEIRDQLKYIEET.

It belongs to the UvrC family. As to quaternary structure, interacts with UvrB in an incision complex.

Its subcellular location is the cytoplasm. In terms of biological role, the UvrABC repair system catalyzes the recognition and processing of DNA lesions. UvrC both incises the 5' and 3' sides of the lesion. The N-terminal half is responsible for the 3' incision and the C-terminal half is responsible for the 5' incision. This Lactobacillus acidophilus (strain ATCC 700396 / NCK56 / N2 / NCFM) protein is UvrABC system protein C.